The primary structure comprises 410 residues: Chitinase-3-like protein 1 (410 aa).

Residues Met1–Ala48 form the signal peptide. In terms of domain architecture, GH18 spans Tyr49 to Thr410. The cysteines at positions 53 and 78 are disulfide-linked. A glycan (N-linked (GlcNAc...) asparagine) is linked at Asn87. Residues Glu97–Trp98, Gly124–Asn127, Tyr168, Met231–Asp234, and Arg290 contribute to the chitin site. A disulfide bridge connects residues Cys327 and Cys391. The important for AKT1 activation and IL8 production stretch occupies residues Gln351–Val365. Chitin is bound at residue Trp379.

This sequence belongs to the glycosyl hydrolase 18 family. As to quaternary structure, monomer.

It is found in the secreted. Its subcellular location is the extracellular space. The protein resides in the cytoplasm. The protein localises to the perinuclear region. It localises to the endoplasmic reticulum. In terms of biological role, carbohydrate-binding lectin with a preference for chitin. Has no chitinase activity. May play a role in tissue remodeling and in the capacity of cells to respond to and cope with changes in their environment. Plays a role in T-helper cell type 2 (Th2) inflammatory response and IL-13-induced inflammation, regulating allergen sensitization, inflammatory cell apoptosis, dendritic cell accumulation and M2 macrophage differentiation. Facilitates invasion of pathogenic enteric bacteria into colonic mucosa and lymphoid organs. Mediates activation of AKT1 signaling pathway and subsequent IL8 production in colonic epithelial cells. Regulates antibacterial responses in lung by contributing to macrophage bacterial killing, controlling bacterial dissemination and augmenting host tolerance. Also regulates hyperoxia-induced injury, inflammation and epithelial apoptosis in lung. The sequence is that of Chitinase-3-like protein 1 (CHI3L1) from Pongo abelii (Sumatran orangutan).